We begin with the raw amino-acid sequence, 362 residues long: Chorismate synthase (362 aa).

Positions alanine 39–arginine 59 are disordered. NADP(+)-binding residues include arginine 48 and arginine 54. Residues arginine 125–serine 127, asparagine 238–alanine 239, glycine 278, lysine 293–serine 297, and arginine 319 each bind FMN.

The protein belongs to the chorismate synthase family. In terms of assembly, homotetramer. It depends on FMNH2 as a cofactor.

It catalyses the reaction 5-O-(1-carboxyvinyl)-3-phosphoshikimate = chorismate + phosphate. It functions in the pathway metabolic intermediate biosynthesis; chorismate biosynthesis; chorismate from D-erythrose 4-phosphate and phosphoenolpyruvate: step 7/7. Catalyzes the anti-1,4-elimination of the C-3 phosphate and the C-6 proR hydrogen from 5-enolpyruvylshikimate-3-phosphate (EPSP) to yield chorismate, which is the branch point compound that serves as the starting substrate for the three terminal pathways of aromatic amino acid biosynthesis. This reaction introduces a second double bond into the aromatic ring system. The chain is Chorismate synthase from Aeromonas hydrophila subsp. hydrophila (strain ATCC 7966 / DSM 30187 / BCRC 13018 / CCUG 14551 / JCM 1027 / KCTC 2358 / NCIMB 9240 / NCTC 8049).